Consider the following 89-residue polypeptide: Small ribosomal subunit protein uS17 (89 aa).

Belongs to the universal ribosomal protein uS17 family. In terms of assembly, part of the 30S ribosomal subunit.

Functionally, one of the primary rRNA binding proteins, it binds specifically to the 5'-end of 16S ribosomal RNA. This Verminephrobacter eiseniae (strain EF01-2) protein is Small ribosomal subunit protein uS17.